Consider the following 101-residue polypeptide: MLVFLHAVFITVLILLLIGRLQLLERLLLNHSLNLKTVNNVLGVTHTGLKVNCLQLLKPDCLDFNILHRSLAETRLLKVVLRVIFLVLLGFCCYRLLVTLF.

The N-terminal stretch at 1–23 (MLVFLHAVFITVLILLLIGRLQL) is a signal peptide. The helical transmembrane segment at 81 to 101 (LRVIFLVLLGFCCYRLLVTLF) threads the bilayer.

The protein belongs to the coronaviruses ns7/ns7a protein family.

The protein localises to the host membrane. In terms of biological role, may function in the formation of membrane-bound replication complexes or in the assembly of the virus. The polypeptide is Non-structural protein 7a (Canine coronavirus (strain Insavc-1) (CCoV)).